Consider the following 318-residue polypeptide: Taste receptor type 2 member 7 (318 aa).

Residues 1-9 (MTDKVQTTL) lie on the Extracellular side of the membrane. The chain crosses the membrane as a helical span at residues 10-30 (LFLAIGEFSVGILGNAFIGLV). Topologically, residues 31-55 (NCMDWVKKRKIASIDLILTSLAISR) are cytoplasmic. Residues 56 to 76 (ICLLCVILLDCFMLVLYPDVY) form a helical membrane-spanning segment. Residues 77–94 (ATGKQMRIIDFFWTLTNH) are Extracellular-facing. Residues 95 to 115 (LSIWFATCLSIYYFFKIANFF) traverse the membrane as a helical segment. At 116–128 (HPLFLWMKWRIDR) the chain is on the cytoplasmic side. The helical transmembrane segment at 129–149 (VISWILLGCMVLSVFINLPAT) threads the bilayer. Over 150 to 187 (ENLNADFRRCVKAKRKTNLTWSCRVTKAQHASTKLFLN) the chain is Extracellular. The N-linked (GlcNAc...) asparagine glycan is linked to Asn167. A helical membrane pass occupies residues 188-208 (LVTLLPFSVCLMSFFLLILSL). Topologically, residues 209–235 (WRHIRRMQLSATGCRDPSTEAHVRALK) are cytoplasmic. A helical membrane pass occupies residues 236–256 (AVISFLLLFIAYYLSFLIATS). The Extracellular segment spans residues 257 to 266 (SYFIPETELA). The helical transmembrane segment at 267–287 (VIFGEFIALIYPSSHSFILIL) threads the bilayer. The Cytoplasmic portion of the chain corresponds to 288 to 318 (GNSKLRRASLKVLWTVMSILKGRKFQQHKQI).

This sequence belongs to the G-protein coupled receptor T2R family.

It is found in the membrane. Its function is as follows. Gustducin-coupled receptor implicated in the perception of bitter compounds in the oral cavity and the gastrointestinal tract. Signals through PLCB2 and the calcium-regulated cation channel TRPM5. This chain is Taste receptor type 2 member 7 (TAS2R7), found in Macaca mulatta (Rhesus macaque).